We begin with the raw amino-acid sequence, 494 residues long: E3 ubiquitin-protein ligase ari-1.1 (494 aa).

Residues 1 to 30 (MSSDDEINMDDSDSSQGEIDDGCMSDDDGI) show a composition bias toward acidic residues. Positions 1-52 (MSSDDEINMDDSDSSQGEIDDGCMSDDDGIVLESREQNSSDYKDNGEPDNEV) are disordered. Residues 33-52 (ESREQNSSDYKDNGEPDNEV) show a composition bias toward basic and acidic residues. Residues 124 to 331 (GDAECDICCS…SSWYSCNRFD (208 aa)) form a TRIAD supradomain region. Residues Cys128, Cys131, Cys142, His144, Cys147, Cys150, Cys169, Cys174, Cys214, Cys219, Cys235, Cys237, Cys242, Cys245, His250, Cys255, Cys282, and Cys285 each contribute to the Zn(2+) site. An RING-type 1 zinc finger spans residues 128-174 (CDICCSLGELSGLSCNHRACTQCWKAYLTNKIANNAQSEIECMAPNC). Residues 194 to 255 (ATYRKLIVAS…GHDWHEPVNC (62 aa)) form an IBR-type zinc finger. The segment at 282–313 (CPKCMITIEKDGGCNHMTCKNTACRFEFCWMC) adopts an RING-type 2; atypical zinc-finger fold. The active site involves Cys295. Residues Cys300, Cys305, Cys310, Cys313, His320, and Cys327 each contribute to the Zn(2+) site. The tract at residues 346 to 494 (RANLQRYLFY…ADQELWVFNE (149 aa)) is ariadne domain.

It belongs to the RBR family. Ariadne subfamily. In terms of assembly, interacts with ubiquitin-conjugating enzyme E2 ubc-18.

The protein localises to the nucleus. It localises to the cytoplasm. It catalyses the reaction [E2 ubiquitin-conjugating enzyme]-S-ubiquitinyl-L-cysteine + [acceptor protein]-L-lysine = [E2 ubiquitin-conjugating enzyme]-L-cysteine + [acceptor protein]-N(6)-ubiquitinyl-L-lysine.. With respect to regulation, autoinhibited by the ariadne domain, which masks the second RING-type zinc finger that contains the active site and inhibits the E3 activity. Its function is as follows. E3 ubiquitin-protein transferase, which catalyzes ubiquitination of target proteins together with ubiquitin-conjugating enzyme E2 ubc-18. Acts with ubc-18 to regulate pharyngeal development. In Caenorhabditis elegans, this protein is E3 ubiquitin-protein ligase ari-1.1.